A 472-amino-acid chain; its full sequence is Adenosylhomocysteinase (472 aa).

Substrate-binding residues include threonine 62, aspartate 137, and glutamate 197. 198–200 (TTT) serves as a coordination point for NAD(+). Substrate contacts are provided by lysine 227 and aspartate 231. NAD(+) contacts are provided by residues asparagine 232, 261-266 (GYGDVG), glutamate 284, asparagine 319, 340-342 (IGH), and asparagine 385.

The protein belongs to the adenosylhomocysteinase family. NAD(+) is required as a cofactor.

The protein localises to the cytoplasm. The catalysed reaction is S-adenosyl-L-homocysteine + H2O = L-homocysteine + adenosine. It functions in the pathway amino-acid biosynthesis; L-homocysteine biosynthesis; L-homocysteine from S-adenosyl-L-homocysteine: step 1/1. May play a key role in the regulation of the intracellular concentration of adenosylhomocysteine. In Bordetella bronchiseptica (strain ATCC BAA-588 / NCTC 13252 / RB50) (Alcaligenes bronchisepticus), this protein is Adenosylhomocysteinase.